Reading from the N-terminus, the 235-residue chain is Retron Ec48 transmembrane protein (235 aa).

The next 2 helical transmembrane spans lie at 11–31 (IVGVSSALFLIFSLISLFETI) and 64–84 (AFGWLITTFVTVFGVMIALMT).

Its subcellular location is the cell inner membrane. Membrane component of antiviral defense system Retron Ec48, composed of a non-coding RNA (ncRNA), a reverse transcriptase (RT) and this membrane protein. Expression of this retron confers protection against bacteriophages lambda, T2, T4, T5 and T7. At multiplicity of infection (MOI) of 0.02 cultures grow normally when infected with lambda without collapsing, at MOI 2 cultures enter growth stasis. At MOI 3 cell membranes are permeabilized within 15 minutes of infection but do not lyse, suggesting the phage are not able to finish a replication cycle. Antiviral defense is suppressed by mutations that knockout the lambda gam expression or phage T7 gp5.9 expression; both viral genes inhibit host RecBCD. The Ec48 retron may sense the integrity of the RecBCD enzyme; when RecBCD is perturbed by viral proteins the Ec48 effector (the membrane protein) is activated, leading to abortive infection and bacterial growth arrest. The sequence is that of Retron Ec48 transmembrane protein from Escherichia coli.